Reading from the N-terminus, the 397-residue chain is Elongation factor Tu (397 aa).

The tr-type G domain maps to 10 to 206 (KPHCNIGTIG…TIDEYVPDPE (197 aa)). The interval 19-26 (GHVDHGKT) is G1. Position 19 to 26 (19 to 26 (GHVDHGKT)) interacts with GTP. Thr-26 is a binding site for Mg(2+). Residues 61–65 (GITIS) form a G2 region. The G3 stretch occupies residues 82-85 (DCPG). GTP contacts are provided by residues 82–86 (DCPGH) and 137–140 (NKCD). Residues 137 to 140 (NKCD) form a G4 region. A G5 region spans residues 175 to 177 (SAL).

The protein belongs to the TRAFAC class translation factor GTPase superfamily. Classic translation factor GTPase family. EF-Tu/EF-1A subfamily. As to quaternary structure, monomer.

The protein resides in the cytoplasm. It catalyses the reaction GTP + H2O = GDP + phosphate + H(+). Its function is as follows. GTP hydrolase that promotes the GTP-dependent binding of aminoacyl-tRNA to the A-site of ribosomes during protein biosynthesis. In Lachnospira eligens (strain ATCC 27750 / DSM 3376 / VPI C15-48 / C15-B4) (Eubacterium eligens), this protein is Elongation factor Tu.